Reading from the N-terminus, the 183-residue chain is Capsid protein (183 aa).

Residues 143–183 are disordered; the sequence is LPETTVIRRRGRSPRRRTPSPRRRRSQSPRRRRSQSREPQC. The segment covering 149–176 has biased composition (basic residues); it reads IRRRGRSPRRRTPSPRRRRSQSPRRRRS. Residues Ser155, Ser162, and Ser170 each carry the phosphoserine; by host modification. The stretch at 155–161 is one 1; half-length repeat; sequence SPRRRTP. Positions 155–177 are 3 X 8 AA repeats of S-P-R-R-R-[PR]-S-Q; sequence SPRRRTPSPRRRRSQSPRRRRSQ. The short motif at 158 to 175 is the Bipartite nuclear localization signal element; that stretch reads RRTPSPRRRRSQSPRRRR. 2 tandem repeats follow at residues 162 to 169 and 170 to 177. The tract at residues 177 to 183 is RNA binding; that stretch reads QSREPQC.

The protein belongs to the orthohepadnavirus core antigen family. Homodimerizes, then multimerizes. Interacts with cytosol exposed regions of viral L glycoprotein present in the reticulum-to-Golgi compartment. Interacts with human FLNB. Phosphorylated form interacts with host importin alpha; this interaction depends on the exposure of the NLS, which itself depends upon genome maturation and/or phosphorylation of the capsid protein. Interacts with host NUP153. Post-translationally, phosphorylated by host SRPK1, SRPK2, and maybe protein kinase C or GAPDH. Phosphorylation is critical for pregenomic RNA packaging. Protein kinase C phosphorylation is stimulated by HBx protein and may play a role in transport of the viral genome to the nucleus at the late step during the viral replication cycle.

Its subcellular location is the virion. The protein localises to the host cytoplasm. Its function is as follows. Self assembles to form an icosahedral capsid. Most capsids appear to be large particles with an icosahedral symmetry of T=4 and consist of 240 copies of capsid protein, though a fraction forms smaller T=3 particles consisting of 180 capsid proteins. Entering capsids are transported along microtubules to the nucleus. Phosphorylation of the capsid is thought to induce exposure of nuclear localization signal in the C-terminal portion of the capsid protein that allows binding to the nuclear pore complex via the importin (karyopherin-) alpha and beta. Capsids are imported in intact form through the nuclear pore into the nuclear basket, where it probably binds NUP153. Only capsids that contain the mature viral genome can release the viral DNA and capsid protein into the nucleoplasm. Immature capsids get stuck in the basket. Capsids encapsulate the pre-genomic RNA and the P protein. Pre-genomic RNA is reverse-transcribed into DNA while the capsid is still in the cytoplasm. The capsid can then either be directed to the nucleus, providing more genomes for transcription, or bud through the endoplasmic reticulum to provide new virions. In Hepatitis B virus genotype B1 (isolate Japan/Ry30/2002) (HBV-B), this protein is Capsid protein.